Here is an 828-residue protein sequence, read N- to C-terminus: Neurotrophin receptor-interacting factor 1 (828 aa).

Positions 14–85 (VKFEDVSLTF…QREIPQDTLP (72 aa)) constitute a KRAB 1 domain. A Glycyl lysine isopeptide (Lys-Gly) (interchain with G-Cter in ubiquitin) cross-link involves residue Lys15. In terms of domain architecture, SCAN box spans 158–240 (RQKFRHFQYE…ALLENMTSVS (83 aa)). In terms of domain architecture, KRAB 2 spans 280 to 370 (VTFQDVAVDF…ESILEDGVKE (91 aa)). Disordered regions lie at residues 328 to 355 (RELTPDSPIPVVKPIHDPNTNDLSRNGT), 377 to 490 (NQVG…DPIT), and 575 to 611 (QKGYKEGNVQGNRNSWKHIKPHQKGSKGERVEELSTS). Over residues 345–355 (PNTNDLSRNGT) the composition is skewed to polar residues. The segment covering 384-394 (EKGHPQKKFSE) has biased composition (basic and acidic residues). Residues 418 to 433 (KYVKVKQKGTGKRKGR) are compositionally biased toward basic residues. The span at 458-478 (RSGSTPVTHGSSIKKQQQGSE) shows a compositional bias: polar residues. Residues 589–599 (SWKHIKPHQKG) are compositionally biased toward basic residues. The segment covering 600-611 (SKGERVEELSTS) has biased composition (basic and acidic residues). C2H2-type zinc fingers lie at residues 684-706 (CRCSECGKLFRNARYFSVHKKIH), 712-734 (YMCMACGKAFVQSSSLTQHLRIH), 740-762 (FECSECGRTFNDRSAISQHLRTH), 768-790 (YHCERCGKAFRQSSHLTRHERTH), and 796-818 (YVCIKCGKAFTQSSHLIGHQKTH).

The protein belongs to the krueppel C2H2-type zinc-finger protein family. As to quaternary structure, interacts with NGFR/p75(NTR). Interacts (via KRAB 1 domain) with TRAF6. Interacts (when ubiquitinated at Lys-15) with SQSTM1/p62. Post-translationally, ubiquitinated by TRAF6 at Lys-15 through 'Lys-63'-linked polyubiquitination. 'Lys-63'-linked polyubiquitination occurs in response to NGFR/p75(NTR) cleavage by gamma-secretase and promotes binding with the ICD cleavage product of NGFR/p75(NTR), followed by translocation into the nucleus and subsequent apoptosis. As to expression, ubiquitously expressed at low level. Expressed at higher level in testis.

The protein localises to the cytoplasm. It is found in the nucleus. Its function is as follows. Transcription regulator involved in NGFR/p75(NTR)-mediated apoptosis. Essential component of the NGFR/p75(NTR) apoptotic pathway: upon ligand-binding and subsequent cleavage of NGFR/p75(NTR), binds to the intracellular domain (ICD) cleavage product of NGFR/p75(NTR), translocates to the nucleus and induces apoptosis, possibly by regulating expression of key regulators of apoptosis. Induces NGFR/p75(NTR)-mediated apoptosis in retina and sympathetic neurons. May also regulate expression of neuronal cholesterol biosynthesis genes. Probably acts as a transcription repressor: specifically binds to the 3'-end of zinc-finger coding genes and recruiting chromatin-modifying proteins such as SETDB1 and TRIM28/KAP1, leading to transcription repression. This Mus musculus (Mouse) protein is Neurotrophin receptor-interacting factor 1 (Nrif1).